Reading from the N-terminus, the 1687-residue chain is PH domain leucine-rich repeat-containing protein phosphatase 1 (1687 aa).

Residue M1 is modified to N-acetylmethionine. 2 disordered regions span residues 1–96 and 230–406; these read MEPA…GGGA and AAAP…AAPD. A compositionally biased stretch (low complexity) spans 78–96; sequence APQPAAGGAAPVPAAGGGA. S286 carries the phosphoserine modification. The segment covering 314–326 has biased composition (polar residues); sequence DTESFSLSPSAES. A Phosphoserine modification is found at S372. In terms of domain architecture, PH spans 492–592; it reads RIQLSGMYNV…WLRQVSKVAS (101 aa). LRR repeat units lie at residues 594-615, 617-638, 648-669, 671-692, 694-715, 717-739, 740-760, 764-785, 788-809, 829-850, 851-872, 874-895, 897-918, 919-940, 943-964, 969-989, 993-1014, 1017-1038, 1040-1061, 1062-1083, and 1085-1106; these read RISS…LFYS, DLTH…PAAR, KLKS…VCSI, TLAE…VGDM, NLQT…LESM, QLSY…EKLT, AVDK…QALR, HIKH…EVDF, HVTQ…IFNN, FLKA…PVPN, YLSY…VCES, KLEV…LFCN, SLRK…LERT, SVEV…LLMK, SLRF…TLSE, ILQE…PLLT, RLKI…KMAK, ELEE…IMNC, RMHT…MQLP, EVKC…ENLP, and KLQE…SLEL. The region spanning 1131-1378 is the PPM-type phosphatase domain; the sequence is SHGYTEASGV…DSISAVVVQL (248 aa). The Mn(2+) site is built by D1166, G1167, K1330, and D1369. Disordered stretches follow at residues 1414 to 1465 and 1604 to 1687; these read DRPS…SSPA and PGGY…DTPL. The segment covering 1424-1445 has biased composition (low complexity); that stretch reads SSSSGMASEISSELSTSEMSSE. The segment covering 1649–1669 has biased composition (pro residues); sequence LPPPPQPPQPQPQPQPQPQPQ. The short motif at 1685–1687 is the PDZ-binding element; sequence TPL.

In terms of assembly, interacts with the nucleotide free form of K-Ras (KRAS) via its LRR repeats. Interacts with AKT2, AKT3 and PRKCB. Interacts with WDR48 and USP12. The cofactor is Mn(2+). In terms of tissue distribution, isoforms 1 and 2 are expressed in the retina.

The protein resides in the cytoplasm. The protein localises to the membrane. It is found in the nucleus. It carries out the reaction O-phospho-L-seryl-[protein] + H2O = L-seryl-[protein] + phosphate. The enzyme catalyses O-phospho-L-threonyl-[protein] + H2O = L-threonyl-[protein] + phosphate. Its activity is regulated as follows. Insensitive to okadaic acid. Deubiquitination by WDR48-USP12 complex positively regulates PHLPP1 stability. Protein phosphatase involved in regulation of Akt and PKC signaling. Mediates dephosphorylation in the C-terminal domain hydrophobic motif of members of the AGC Ser/Thr protein kinase family; specifically acts on 'Ser-473' of AKT2 and AKT3, 'Ser-660' of PRKCB and 'Ser-657' of PRKCA. Isoform 2 seems to have a major role in regulating Akt signaling in hippocampal neurons. Akt regulates the balance between cell survival and apoptosis through a cascade that primarily alters the function of transcription factors that regulate pro- and antiapoptotic genes. Dephosphorylation of 'Ser-473' of Akt triggers apoptosis and suppression of tumor growth. Dephosphorylation of PRKCA and PRKCB leads to their destabilization and degradation. Dephosphorylates STK4 on 'Thr-387' leading to STK4 activation and apoptosis. Dephosphorylates RPS6KB1 and is involved in regulation of cap-dependent translation. Inhibits cancer cell proliferation and may act as a tumor suppressor. Dephosphorylates RAF1 inhibiting its kinase activity. May act as a negative regulator of K-Ras signaling in membrane rafts. Involved in the hippocampus-dependent long-term memory formation. Involved in circadian control by regulating the consolidation of circadian periodicity after resetting. Involved in development and function of regulatory T-cells. The chain is PH domain leucine-rich repeat-containing protein phosphatase 1 (Phlpp1) from Mus musculus (Mouse).